Consider the following 248-residue polypeptide: Triosephosphate isomerase (248 aa).

9–11 (NWK) serves as a coordination point for substrate. The Electrophile role is filled by His94. Glu166 serves as the catalytic Proton acceptor. Residues Gly172, Ser211, and 232–233 (GG) contribute to the substrate site.

This sequence belongs to the triosephosphate isomerase family. As to quaternary structure, homodimer.

Its subcellular location is the cytoplasm. It catalyses the reaction D-glyceraldehyde 3-phosphate = dihydroxyacetone phosphate. Its pathway is carbohydrate biosynthesis; gluconeogenesis. The protein operates within carbohydrate degradation; glycolysis; D-glyceraldehyde 3-phosphate from glycerone phosphate: step 1/1. Its function is as follows. Involved in the gluconeogenesis. Catalyzes stereospecifically the conversion of dihydroxyacetone phosphate (DHAP) to D-glyceraldehyde-3-phosphate (G3P). In Herminiimonas arsenicoxydans, this protein is Triosephosphate isomerase.